The primary structure comprises 116 residues: Protein MGF 110-2L (116 aa).

Positions 1–19 (MRFFSYLGLLLAGLASLAS) are cleaved as a signal peptide.

Belongs to the asfivirus MGF 110 family.

In terms of biological role, plays a role in virus cell tropism, and may be required for efficient virus replication in macrophages. The chain is Protein MGF 110-2L from Ornithodoros (relapsing fever ticks).